The sequence spans 225 residues: NAD(P)H-quinone oxidoreductase subunit K, chloroplastic (225 aa).

The [4Fe-4S] cluster site is built by Cys43, Cys44, Cys108, and Cys139.

This sequence belongs to the complex I 20 kDa subunit family. In terms of assembly, NDH is composed of at least 16 different subunits, 5 of which are encoded in the nucleus. Requires [4Fe-4S] cluster as cofactor.

It is found in the plastid. The protein localises to the chloroplast thylakoid membrane. It catalyses the reaction a plastoquinone + NADH + (n+1) H(+)(in) = a plastoquinol + NAD(+) + n H(+)(out). It carries out the reaction a plastoquinone + NADPH + (n+1) H(+)(in) = a plastoquinol + NADP(+) + n H(+)(out). Functionally, NDH shuttles electrons from NAD(P)H:plastoquinone, via FMN and iron-sulfur (Fe-S) centers, to quinones in the photosynthetic chain and possibly in a chloroplast respiratory chain. The immediate electron acceptor for the enzyme in this species is believed to be plastoquinone. Couples the redox reaction to proton translocation, and thus conserves the redox energy in a proton gradient. This chain is NAD(P)H-quinone oxidoreductase subunit K, chloroplastic, found in Lemna minor (Common duckweed).